The following is a 717-amino-acid chain: Acetone carboxylase beta subunit (717 aa).

As to quaternary structure, heterohexamer of two alpha, two beta and two gamma subunits. Fe cation is required as a cofactor. Mg(2+) serves as cofactor. It depends on Zn(2+) as a cofactor. In terms of processing, the N-terminus is blocked.

The enzyme catalyses acetone + hydrogencarbonate + 2 ATP + 3 H2O = acetoacetate + 2 AMP + 4 phosphate + 4 H(+). In terms of biological role, catalyzes the carboxylation of acetone to form acetoacetate. Has a reduced activity on butanone, and no activity on 2-pentatone, 3-pentatone, 2-hexanone, chloroacetone, pyruvate, phosphoenolpyruvate, acetaldehyde, propionaldehyde and propylene oxide. The sequence is that of Acetone carboxylase beta subunit from Xanthobacter autotrophicus (strain ATCC BAA-1158 / Py2).